Here is a 118-residue protein sequence, read N- to C-terminus: Histone H4 (118 aa).

Residues 1-39 (MATDTGSGRGKGGKGVTLGKGSKGAKASKGGKRIRTKTQ) form a disordered region. Positions 7–22 (SGRGKGGKGVTLGKGS) are enriched in gly residues.

It belongs to the histone H4 family. The nucleosome is a histone octamer containing two molecules each of H2A, H2B, H3 and H4 assembled in one H3-H4 heterotetramer and two H2A-H2B heterodimers. The octamer wraps approximately 147 bp of DNA.

Its subcellular location is the nucleus. The protein resides in the chromosome. Core component of nucleosome. Nucleosomes wrap and compact DNA into chromatin, limiting DNA accessibility to the cellular machineries which require DNA as a template. Histones thereby play a central role in transcription regulation, DNA repair, DNA replication and chromosomal stability. DNA accessibility is regulated via a complex set of post-translational modifications of histones, also called histone code, and nucleosome remodeling. The sequence is that of Histone H4 from Entamoeba histolytica (strain ATCC 30459 / HM-1:IMSS / ABRM).